The following is a 160-amino-acid chain: 6,7-dimethyl-8-ribityllumazine synthase (160 aa).

5-amino-6-(D-ribitylamino)uracil is bound by residues tryptophan 26, 58–60 (AIE), and 80–82 (VVI). Residue 85–86 (ET) coordinates (2S)-2-hydroxy-3-oxobutyl phosphate. Catalysis depends on histidine 88, which acts as the Proton donor. Position 113 (asparagine 113) interacts with 5-amino-6-(D-ribitylamino)uracil. Arginine 127 contributes to the (2S)-2-hydroxy-3-oxobutyl phosphate binding site.

The protein belongs to the DMRL synthase family. As to quaternary structure, homopentamer.

The catalysed reaction is (2S)-2-hydroxy-3-oxobutyl phosphate + 5-amino-6-(D-ribitylamino)uracil = 6,7-dimethyl-8-(1-D-ribityl)lumazine + phosphate + 2 H2O + H(+). Its pathway is cofactor biosynthesis; riboflavin biosynthesis; riboflavin from 2-hydroxy-3-oxobutyl phosphate and 5-amino-6-(D-ribitylamino)uracil: step 1/2. Catalyzes the formation of 6,7-dimethyl-8-ribityllumazine by condensation of 5-amino-6-(D-ribitylamino)uracil with 3,4-dihydroxy-2-butanone 4-phosphate. This is the penultimate step in the biosynthesis of riboflavin. In Mycobacteroides abscessus (strain ATCC 19977 / DSM 44196 / CCUG 20993 / CIP 104536 / JCM 13569 / NCTC 13031 / TMC 1543 / L948) (Mycobacterium abscessus), this protein is 6,7-dimethyl-8-ribityllumazine synthase.